Consider the following 126-residue polypeptide: Small ribosomal subunit protein uS12 (126 aa).

Asp-89 is modified (3-methylthioaspartic acid).

Belongs to the universal ribosomal protein uS12 family. Part of the 30S ribosomal subunit. Contacts proteins S8 and S17. May interact with IF1 in the 30S initiation complex.

Functionally, with S4 and S5 plays an important role in translational accuracy. In terms of biological role, interacts with and stabilizes bases of the 16S rRNA that are involved in tRNA selection in the A site and with the mRNA backbone. Located at the interface of the 30S and 50S subunits, it traverses the body of the 30S subunit contacting proteins on the other side and probably holding the rRNA structure together. The combined cluster of proteins S8, S12 and S17 appears to hold together the shoulder and platform of the 30S subunit. The polypeptide is Small ribosomal subunit protein uS12 (Carboxydothermus hydrogenoformans (strain ATCC BAA-161 / DSM 6008 / Z-2901)).